The following is an 894-amino-acid chain: Protein translocase subunit SecA (894 aa).

ATP is bound by residues Gln-87, 105–109 (GEGKT), and Asp-512. The disordered stretch occupies residues 857 to 894 (FNLGDEPEAQQPVTSKKVGRNEPCPCGSGKKYKQCCGK). Positions 880, 882, 891, and 892 each coordinate Zn(2+).

Belongs to the SecA family. As to quaternary structure, monomer and homodimer. Part of the essential Sec protein translocation apparatus which comprises SecA, SecYEG and auxiliary proteins SecDF-YajC and YidC. Zn(2+) is required as a cofactor.

Its subcellular location is the cell inner membrane. It is found in the cytoplasm. The catalysed reaction is ATP + H2O + cellular proteinSide 1 = ADP + phosphate + cellular proteinSide 2.. Its function is as follows. Part of the Sec protein translocase complex. Interacts with the SecYEG preprotein conducting channel. Has a central role in coupling the hydrolysis of ATP to the transfer of proteins into and across the cell membrane, serving as an ATP-driven molecular motor driving the stepwise translocation of polypeptide chains across the membrane. This Geotalea uraniireducens (strain Rf4) (Geobacter uraniireducens) protein is Protein translocase subunit SecA.